We begin with the raw amino-acid sequence, 78 residues long: Acyl carrier protein (78 aa).

The 76-residue stretch at 2–77 folds into the Carrier domain; that stretch reads SDIAERVKKI…DAIKFLEKNA (76 aa). O-(pantetheine 4'-phosphoryl)serine is present on serine 37.

Belongs to the acyl carrier protein (ACP) family. 4'-phosphopantetheine is transferred from CoA to a specific serine of apo-ACP by AcpS. This modification is essential for activity because fatty acids are bound in thioester linkage to the sulfhydryl of the prosthetic group.

It localises to the cytoplasm. The protein operates within lipid metabolism; fatty acid biosynthesis. Functionally, carrier of the growing fatty acid chain in fatty acid biosynthesis. The polypeptide is Acyl carrier protein (Azorhizobium caulinodans (strain ATCC 43989 / DSM 5975 / JCM 20966 / LMG 6465 / NBRC 14845 / NCIMB 13405 / ORS 571)).